Reading from the N-terminus, the 114-residue chain is Ribonuclease P protein component (114 aa).

Belongs to the RnpA family. As to quaternary structure, consists of a catalytic RNA component (M1 or rnpB) and a protein subunit.

It catalyses the reaction Endonucleolytic cleavage of RNA, removing 5'-extranucleotides from tRNA precursor.. In terms of biological role, RNaseP catalyzes the removal of the 5'-leader sequence from pre-tRNA to produce the mature 5'-terminus. It can also cleave other RNA substrates such as 4.5S RNA. The protein component plays an auxiliary but essential role in vivo by binding to the 5'-leader sequence and broadening the substrate specificity of the ribozyme. The sequence is that of Ribonuclease P protein component from Exiguobacterium sp. (strain ATCC BAA-1283 / AT1b).